A 328-amino-acid chain; its full sequence is D-cysteine desulfhydrase (328 aa).

N6-(pyridoxal phosphate)lysine is present on Lys-51.

It belongs to the ACC deaminase/D-cysteine desulfhydrase family. Homodimer. Requires pyridoxal 5'-phosphate as cofactor.

It catalyses the reaction D-cysteine + H2O = hydrogen sulfide + pyruvate + NH4(+) + H(+). Functionally, catalyzes the alpha,beta-elimination reaction of D-cysteine and of several D-cysteine derivatives. It could be a defense mechanism against D-cysteine. The polypeptide is D-cysteine desulfhydrase (Klebsiella pneumoniae subsp. pneumoniae (strain ATCC 700721 / MGH 78578)).